Reading from the N-terminus, the 500-residue chain is MSLKFTNTLSKKKEDFISINPNQVKIYCCGVTVYDLCHLGHARSYLNWDVLRRFLIWKGFEVKFVQNFTDIDDKIINRANKEGCSTDELSERNIDEFHKDMDTLSILRPTSMPRATKCLHQIINFIEELEQKKVAYSSNGDVYFSVNKHKNYGKLSGREIENQIDNAAGRLKTNQKESKKNSLDFALWKKSNSGEVSYSSPWGNGRPGWHIECSAMVKQELGESIDIHLGGSDLIFPHHENEIAQSEACNGKELAKYWLHNGMVNVGGEKMSKSLGNFTTIRSLLEEGISPMTLRFFVLQTNYRKPLDFTQEALKAASKGWERLNNCLSFGYIYKIKDQAKNEIILDKPIKKSANTNLDKESFKLLSDFERYMDDDLNTSGALSILFELSQPIRKIINFLKEKDINEVDQDELNQVFYKWELLSELAAVLGLKVNLNHENPKNNPELDTNKIEELIKKRSLAKANKDFLLADKIRDDFKNIGIDLIDKPKGVTEWKQLSD.

Residue C29 participates in Zn(2+) binding. The 'HIGH' region signature appears at 31 to 41; that stretch reads VTVYDLCHLGH. Zn(2+)-binding residues include C213, H238, and E242. A 'KMSKS' region motif is present at residues 270–274; the sequence is KMSKS. K273 contacts ATP.

It belongs to the class-I aminoacyl-tRNA synthetase family. Monomer. Requires Zn(2+) as cofactor.

The protein localises to the cytoplasm. The enzyme catalyses tRNA(Cys) + L-cysteine + ATP = L-cysteinyl-tRNA(Cys) + AMP + diphosphate. This is Cysteine--tRNA ligase from Prochlorococcus marinus (strain NATL1A).